Here is a 185-residue protein sequence, read N- to C-terminus: HTH-type transcriptional regulator SAB2452 (185 aa).

The HTH tetR-type domain maps to 6–66 (IENRQRIEEI…YVIQRDLNTF (61 aa)). Residues 29 to 48 (SMNRIAKELGIGMGTLYRHF) constitute a DNA-binding region (H-T-H motif).

The polypeptide is HTH-type transcriptional regulator SAB2452 (Staphylococcus aureus (strain bovine RF122 / ET3-1)).